The following is a 333-amino-acid chain: Fructose-1,6-bisphosphatase class 1 (333 aa).

Residues E90, D113, L115, and D116 each coordinate Mg(2+). Substrate contacts are provided by residues 116–119 (DGSS), N209, Y242, and K272. E278 provides a ligand contact to Mg(2+).

It belongs to the FBPase class 1 family. In terms of assembly, homotetramer. The cofactor is Mg(2+).

The protein localises to the cytoplasm. It carries out the reaction beta-D-fructose 1,6-bisphosphate + H2O = beta-D-fructose 6-phosphate + phosphate. It participates in carbohydrate biosynthesis; gluconeogenesis. The protein is Fructose-1,6-bisphosphatase class 1 of Pasteurella multocida (strain Pm70).